Consider the following 751-residue polypeptide: FAD-dependent monooxygenase atnA (751 aa).

Residues 8–28 form a helical membrane-spanning segment; sequence LIVGGGVAGLSLAIMLEAYGF. FAD contacts are provided by Glu34, Gly48, and Arg109. Tyr218 is an active-site residue. Positions 311 and 324 each coordinate FAD. 8 consecutive transmembrane segments (helical) span residues 446 to 466, 481 to 501, 508 to 528, 563 to 583, 590 to 610, 639 to 659, 663 to 683, and 706 to 726; these read PLATISWIVFLTLAACFPWSV, SEVFQLYTSVMAVSISGLWVI, LLISPMFSSLPWILASNYWGW, ALLPCLAMAYSIPGILTALAS, DWWPVAHCTFPVLVYVSSTFL, IAVVSSAVHVTLIWNHGAALL, IISLLSVPLARTLASLTALIV, and AWAVILVSTVLLGPAASLAGA.

The protein belongs to the paxM FAD-dependent monooxygenase family. It depends on FAD as a cofactor.

It is found in the membrane. The protein operates within secondary metabolite biosynthesis; terpenoid biosynthesis. In terms of biological role, FAD-dependent monooxygenase; part of the gene cluster that mediates the biosynthesis of the meroterpenoids arthripenoids. The pathway begins with the HR-PKS atnH that catalyzes two chain-extension steps to form a reduced triketide, which then primes the SAT domain in the NR-PKS atnG to initiate three more cycles of extension to give a linear hexaketide corresponding to the polyketide part of arthripenoids. The FAD-dependent monooxygenase atnJ then performs an oxidative decarboxylation at C11 of the atnH/atnG product, via an electrophilic aromatic hydroxylation with concomitant ipso-decarboxylation. The membrane-bound polyprenyl transferase atnF then introduces a farnesyl group before the FAD-dependent monooxygenase atnK functions as the first epoxidase on terminal C12'-C13' olefin, followed by a second epoxidation on C7'-C8' catalyzed by atnA. The terpene cyclase/mutase atnI then initiates the sequential tricyclic ring formation through protonation of the terminal epoxide and catalyzes the regioselective and stereoselective 6/6/6-tricyclic ring formation. The cytochrome P450 monooxygenase atnM is responsible for hydroxylating both C1' and C10'. The next steps may involve ketoreduction and acetyl transfer by the ketoreductase atnB and the acetyltransferase atnC, and lead to the production of arthripenoid B, the final biosynthetic product of the atn cluster. The hydroquinone moiety in arthripenoid B is prone to undergo spontaneous oxidation to afford a benzoquinone compound, a key intermediate for generating structure diversity. For instance, addition of a cysteine followed by ring contraction gives arthripenoid A, tautomerization gives the main product arthripenoid C, addition of a molecular of water or amine affords arthripenoid D or E, respectively, and loss of one water forms arthripenoid F. The protein is FAD-dependent monooxygenase atnA of Arthrinium sp.